A 180-amino-acid chain; its full sequence is Probable DNA replication complex GINS protein PSF2 (180 aa).

The protein belongs to the GINS2/PSF2 family. Component of the GINS complex which is a heterotetramer of gins1, gins2, gins3 and gins4.

The protein resides in the nucleus. Its function is as follows. Required for correct functioning of the GINS complex, a complex that plays an essential role in the initiation of DNA replication, and progression of DNA replication forks. GINS complex is a core component of CDC45-MCM-GINS (CMG) helicase, the molecular machine that unwinds template DNA during replication, and around which the replisome is built. In Caenorhabditis elegans, this protein is Probable DNA replication complex GINS protein PSF2 (psf-2).